The sequence spans 433 residues: Serine--tRNA ligase (433 aa).

235-237 provides a ligand contact to L-serine; it reads TSE. 266 to 268 contributes to the ATP binding site; the sequence is RSE. Position 289 (glutamate 289) interacts with L-serine. 353–356 is an ATP binding site; that stretch reads EISS. Serine 388 lines the L-serine pocket.

The protein belongs to the class-II aminoacyl-tRNA synthetase family. Type-1 seryl-tRNA synthetase subfamily. As to quaternary structure, homodimer. The tRNA molecule binds across the dimer.

The protein localises to the cytoplasm. It carries out the reaction tRNA(Ser) + L-serine + ATP = L-seryl-tRNA(Ser) + AMP + diphosphate + H(+). The catalysed reaction is tRNA(Sec) + L-serine + ATP = L-seryl-tRNA(Sec) + AMP + diphosphate + H(+). It functions in the pathway aminoacyl-tRNA biosynthesis; selenocysteinyl-tRNA(Sec) biosynthesis; L-seryl-tRNA(Sec) from L-serine and tRNA(Sec): step 1/1. Its function is as follows. Catalyzes the attachment of serine to tRNA(Ser). Is also able to aminoacylate tRNA(Sec) with serine, to form the misacylated tRNA L-seryl-tRNA(Sec), which will be further converted into selenocysteinyl-tRNA(Sec). The chain is Serine--tRNA ligase from Burkholderia lata (strain ATCC 17760 / DSM 23089 / LMG 22485 / NCIMB 9086 / R18194 / 383).